A 159-amino-acid polypeptide reads, in one-letter code: Cyclic pyranopterin monophosphate synthase (159 aa).

Residues L75–H77 and M113–E114 contribute to the substrate site. D128 is a catalytic residue.

The protein belongs to the MoaC family. As to quaternary structure, homohexamer; trimer of dimers.

The enzyme catalyses (8S)-3',8-cyclo-7,8-dihydroguanosine 5'-triphosphate = cyclic pyranopterin phosphate + diphosphate. The protein operates within cofactor biosynthesis; molybdopterin biosynthesis. In terms of biological role, catalyzes the conversion of (8S)-3',8-cyclo-7,8-dihydroguanosine 5'-triphosphate to cyclic pyranopterin monophosphate (cPMP). The chain is Cyclic pyranopterin monophosphate synthase from Yersinia pseudotuberculosis serotype O:1b (strain IP 31758).